We begin with the raw amino-acid sequence, 103 residues long: Small ribosomal subunit protein uS10 (103 aa).

Belongs to the universal ribosomal protein uS10 family. Part of the 30S ribosomal subunit.

In terms of biological role, involved in the binding of tRNA to the ribosomes. This is Small ribosomal subunit protein uS10 from Neisseria meningitidis serogroup C / serotype 2a (strain ATCC 700532 / DSM 15464 / FAM18).